An 842-amino-acid polypeptide reads, in one-letter code: MRVRGMQRNWQTLGNWGILFLGILIICSNADKLWVTVYYGVPVWKEATPTLFCASDAKAYEKEVHNVWATHACVPTDPNPQEVEMENVTENFNMWKNNMVEQMHTDIISLWDESLKPCVELTPLCVTLNCTDYKGTNSTNNATSTVVSPAEIKNCSFNITTEIKDKKKKESALFYRLDVLPLNGEGNNSSTEYRLINCNTSTITQTCPKVTFEPIPIHYCAPAGFAILKCKDKRFNGTGPCKNVSTVQCTHGIKPVVSTQLLLNGSLAEEEIIIRSENITDNTKNIIVQLNETVQINCTRPNNNTRKSIHMGPGKAFYTTGDIIGDIRQAHCNISGEKWNMTLSRVKEKLKEHFKNGTITFKPPNPGGDPEILTHMFNCAGEFFYCNTTKLFNETGENGTITLPCRIKQIINMWQKVGKAIYAPPIAGSINCSSNITGMILTRDGGNNTHNETFRPGGGDMRDNWRSELYKYKVVQIEPLGIAPTRARRRVVQREKRAVGLGAVFFGFLGAAGSTMGAASITLTVQARQLLSGIVQQQSNLLRAIEAQQHLLQLTVWGIKQLRARILAVERYLKDQQLLGIWGCSGKLICTTNVPWNSSWSNKSWEEIWNNMTWMEWEKEIGNYSDTIYKLIEESQTQQEKNEQDLLALDKWASLWNWFDITKWLWYIKIFIMIIGGLIGLRIAFAVLSVVNRVRQGYSPLSFQTLIPTSRGADRPEGIEEEGGEQDKNRSVRLVSGFLALAWDDLRNLCLFSYRQLRNLILIVTRILERGLRGGWEALKYLWNLVQYWSQELKNSAISLLNTTAIAVAGGTDRIIEIGQRAFRALLHIPRRIRQGLERALL.

A signal peptide spans 1-31 (MRVRGMQRNWQTLGNWGILFLGILIICSNAD). Residues 32-670 (KLWVTVYYGV…ITKWLWYIKI (639 aa)) lie on the Extracellular side of the membrane. Cysteine 53 and cysteine 73 are disulfide-bonded. N-linked (GlcNAc...) asparagine; by host glycans are attached at residues asparagine 87, asparagine 129, asparagine 137, asparagine 141, asparagine 154, asparagine 158, asparagine 187, asparagine 188, asparagine 199, asparagine 236, asparagine 243, asparagine 264, asparagine 278, asparagine 291, asparagine 297, asparagine 303, asparagine 333, asparagine 340, and asparagine 356. 5 disulfide bridges follow: cysteine 118–cysteine 207, cysteine 125–cysteine 198, cysteine 130–cysteine 155, cysteine 220–cysteine 249, and cysteine 230–cysteine 241. The interval 130-154 (CTDYKGTNSTNNATSTVVSPAEIKN) is V1. The V2 stretch occupies residues 155 to 198 (CSFNITTEIKDKKKKESALFYRLDVLPLNGEGNNSSTEYRLINC). A V3 region spans residues 298–331 (CTRPNNNTRKSIHMGPGKAFYTTGDIIGDIRQAH). Cysteine 298 and cysteine 332 are oxidised to a cystine. The interval 364 to 375 (PNPGGDPEILTH) is CD4-binding loop. Intrachain disulfides connect cysteine 379–cysteine 432 and cysteine 386–cysteine 405. The tract at residues 386–405 (CNTTKLFNETGENGTITLPC) is V4. Asparagine 387, asparagine 393, asparagine 398, asparagine 431, asparagine 435, asparagine 447, and asparagine 451 each carry an N-linked (GlcNAc...) asparagine; by host glycan. Residues 448–457 (NTHNETFRPG) form a V5 region. The tract at residues 498 to 518 (AVGLGAVFFGFLGAAGSTMGA) is fusion peptide. Residues 560–578 (KQLRARILAVERYLKDQQL) form an immunosuppression region. Cysteine 584 and cysteine 590 are joined by a disulfide. 4 N-linked (GlcNAc...) asparagine; by host glycosylation sites follow: asparagine 597, asparagine 602, asparagine 611, and asparagine 623. A coiled-coil region spans residues 619 to 653 (KEIGNYSDTIYKLIEESQTQQEKNEQDLLALDKWA). An MPER; binding to GalCer region spans residues 648–669 (ALDKWASLWNWFDITKWLWYIK). Residues 671–691 (FIMIIGGLIGLRIAFAVLSVV) form a helical membrane-spanning segment. The Cytoplasmic segment spans residues 692–842 (NRVRQGYSPL…IRQGLERALL (151 aa)). A YXXL motif; contains endocytosis signal motif is present at residues 698–701 (YSPL). Residue cysteine 750 is the site of S-palmitoyl cysteine; by host attachment. The Di-leucine internalization motif motif lies at 841–842 (LL).

Belongs to the HIV-1 env protein family. The mature envelope protein (Env) consists of a homotrimer of non-covalently associated gp120-gp41 heterodimers. The resulting complex protrudes from the virus surface as a spike. There seems to be as few as 10 spikes on the average virion. Interacts with host CD4, CCR5 and CXCR4. Gp120 also interacts with the C-type lectins CD209/DC-SIGN and CLEC4M/DC-SIGNR (collectively referred to as DC-SIGN(R)). Gp120 and gp41 interact with GalCer. Gp120 interacts with host ITGA4/ITGB7 complex; on CD4+ T-cells, this interaction results in rapid activation of integrin ITGAL/LFA-1, which facilitates efficient cell-to-cell spreading of HIV-1. Gp120 interacts with cell-associated heparan sulfate; this interaction increases virus infectivity on permissive cells and may be involved in infection of CD4- cells. As to quaternary structure, the mature envelope protein (Env) consists of a homotrimer of non-covalently associated gp120-gp41 heterodimers. The resulting complex protrudes from the virus surface as a spike. There seems to be as few as 10 spikes on the average virion. Post-translationally, highly glycosylated by host. The high number of glycan on the protein is reffered to as 'glycan shield' because it contributes to hide protein sequence from adaptive immune system. In terms of processing, palmitoylation of the transmembrane protein and of Env polyprotein (prior to its proteolytic cleavage) is essential for their association with host cell membrane lipid rafts. Palmitoylation is therefore required for envelope trafficking to classical lipid rafts, but not for viral replication. Specific enzymatic cleavages in vivo yield mature proteins. Envelope glycoproteins are synthesized as an inactive precursor that is heavily N-glycosylated and processed likely by host cell furin in the Golgi to yield the mature SU and TM proteins. The cleavage site between SU and TM requires the minimal sequence [KR]-X-[KR]-R. About 2 of the 9 disulfide bonds of gp41 are reduced by P4HB/PDI, following binding to CD4 receptor.

Its subcellular location is the virion membrane. It localises to the host cell membrane. It is found in the host endosome membrane. Oligomerizes in the host endoplasmic reticulum into predominantly trimers. In a second time, gp160 transits in the host Golgi, where glycosylation is completed. The precursor is then proteolytically cleaved in the trans-Golgi and thereby activated by cellular furin or furin-like proteases to produce gp120 and gp41. Its function is as follows. Attaches the virus to the host lymphoid cell by binding to the primary receptor CD4. This interaction induces a structural rearrangement creating a high affinity binding site for a chemokine coreceptor like CXCR4 and/or CCR5. Acts as a ligand for CD209/DC-SIGN and CLEC4M/DC-SIGNR, which are respectively found on dendritic cells (DCs), and on endothelial cells of liver sinusoids and lymph node sinuses. These interactions allow capture of viral particles at mucosal surfaces by these cells and subsequent transmission to permissive cells. HIV subverts the migration properties of dendritic cells to gain access to CD4+ T-cells in lymph nodes. Virus transmission to permissive T-cells occurs either in trans (without DCs infection, through viral capture and transmission), or in cis (following DCs productive infection, through the usual CD4-gp120 interaction), thereby inducing a robust infection. In trans infection, bound virions remain infectious over days and it is proposed that they are not degraded, but protected in non-lysosomal acidic organelles within the DCs close to the cell membrane thus contributing to the viral infectious potential during DCs' migration from the periphery to the lymphoid tissues. On arrival at lymphoid tissues, intact virions recycle back to DCs' cell surface allowing virus transmission to CD4+ T-cells. In terms of biological role, acts as a class I viral fusion protein. Under the current model, the protein has at least 3 conformational states: pre-fusion native state, pre-hairpin intermediate state, and post-fusion hairpin state. During fusion of viral and target intracellular membranes, the coiled coil regions (heptad repeats) assume a trimer-of-hairpins structure, positioning the fusion peptide in close proximity to the C-terminal region of the ectodomain. The formation of this structure appears to drive apposition and subsequent fusion of viral and target cell membranes. Complete fusion occurs in host cell endosomes and is dynamin-dependent, however some lipid transfer might occur at the plasma membrane. The virus undergoes clathrin-dependent internalization long before endosomal fusion, thus minimizing the surface exposure of conserved viral epitopes during fusion and reducing the efficacy of inhibitors targeting these epitopes. Membranes fusion leads to delivery of the nucleocapsid into the cytoplasm. The sequence is that of Envelope glycoprotein gp160 from Homo sapiens (Human).